Consider the following 101-residue polypeptide: Gamma-secretase subunit PEN-2 (101 aa).

Over M1–K17 the chain is Cytoplasmic. Residues Y18–W36 constitute an intramembrane region (helical). Residues F37–V57 are Cytoplasmic-facing. The helical transmembrane segment at W58–F78 threads the bilayer. Over Q79–P101 the chain is Lumenal.

The protein belongs to the PEN-2 family. The functional gamma-secretase complex is composed of at least four polypeptides: a presenilin homodimer (PSEN1 or PSEN2), nicastrin (NCSTN), APH1 (APH1A or APH1B) and PSENEN.

It localises to the endoplasmic reticulum membrane. The protein resides in the golgi apparatus. It is found in the golgi stack membrane. The protein localises to the cell membrane. Its subcellular location is the membrane. Essential subunit of the gamma-secretase complex, an endoprotease complex that catalyzes the intramembrane cleavage of integral membrane proteins such as Notch receptors and APP (amyloid-beta precursor protein). The gamma-secretase complex plays a role in Notch and Wnt signaling cascades and regulation of downstream processes via its role in processing key regulatory proteins, and by regulating cytosolic CTNNB1 levels. PSENEN modulates both endoproteolysis of presenilin and gamma-secretase activity. In Bos taurus (Bovine), this protein is Gamma-secretase subunit PEN-2 (PSENEN).